A 278-amino-acid polypeptide reads, in one-letter code: Phosphatidylglycerol--prolipoprotein diacylglyceryl transferase (278 aa).

3 helical membrane-spanning segments follow: residues 13–33, 50–70, and 89–109; these read LFGI…ALAV, VFDF…LYYV, and NGGL…FFFT. Arg135 is an a 1,2-diacyl-sn-glycero-3-phospho-(1'-sn-glycerol) binding site. A run of 3 helical transmembrane segments spans residues 175-195, 205-225, and 236-256; these read QPTF…LVLL, GEVF…IEGL, and IRVS…IVIV.

This sequence belongs to the Lgt family.

Its subcellular location is the cell membrane. The catalysed reaction is L-cysteinyl-[prolipoprotein] + a 1,2-diacyl-sn-glycero-3-phospho-(1'-sn-glycerol) = an S-1,2-diacyl-sn-glyceryl-L-cysteinyl-[prolipoprotein] + sn-glycerol 1-phosphate + H(+). It participates in protein modification; lipoprotein biosynthesis (diacylglyceryl transfer). Its function is as follows. Catalyzes the transfer of the diacylglyceryl group from phosphatidylglycerol to the sulfhydryl group of the N-terminal cysteine of a prolipoprotein, the first step in the formation of mature lipoproteins. This is Phosphatidylglycerol--prolipoprotein diacylglyceryl transferase from Enterococcus faecalis (strain ATCC 700802 / V583).